A 25-amino-acid polypeptide reads, in one-letter code: Toxin LyeTx 1 (25 aa).

Leucine 25 is subject to Leucine amide.

As to expression, expressed by the venom gland.

Its subcellular location is the secreted. Has antimicrobial activity against Gram-positive bacterium S.aureus (MIC=3.79 uM), Gram-negative bacterium E.coli (MIC=7.81 uM) and yeasts C.krusei (MIC=26.3 uM) and C.neoformans (MIC=13.2 uM). Has hemolytic activity against rabbit erythrocytes. Forms pores in lipid bilayers in vitro; pore formation is reduced when cholesterol is present in the bilayers. This Lycosa erythrognatha (Wolf spider) protein is Toxin LyeTx 1.